A 161-amino-acid polypeptide reads, in one-letter code: Large ribosomal subunit protein uL10 (161 aa).

Belongs to the universal ribosomal protein uL10 family. As to quaternary structure, part of the ribosomal stalk of the 50S ribosomal subunit. The N-terminus interacts with L11 and the large rRNA to form the base of the stalk. The C-terminus forms an elongated spine to which L12 dimers bind in a sequential fashion forming a multimeric L10(L12)X complex.

Its function is as follows. Forms part of the ribosomal stalk, playing a central role in the interaction of the ribosome with GTP-bound translation factors. This chain is Large ribosomal subunit protein uL10, found in Sulfurovum sp. (strain NBC37-1).